Reading from the N-terminus, the 158-residue chain is Ribosome maturation factor RimP (158 aa).

It belongs to the RimP family.

It is found in the cytoplasm. Required for maturation of 30S ribosomal subunits. This is Ribosome maturation factor RimP from Pseudomonas putida (strain ATCC 47054 / DSM 6125 / CFBP 8728 / NCIMB 11950 / KT2440).